Consider the following 70-residue polypeptide: DNA gyrase inhibitor YacG (70 aa).

Positions 9, 12, 28, and 32 each coordinate Zn(2+). Residues 43 to 70 (ESRKIPGSSIDPESIVTSNNKQDNEDEQ) are disordered.

This sequence belongs to the DNA gyrase inhibitor YacG family. Interacts with GyrB. It depends on Zn(2+) as a cofactor.

Its function is as follows. Inhibits all the catalytic activities of DNA gyrase by preventing its interaction with DNA. Acts by binding directly to the C-terminal domain of GyrB, which probably disrupts DNA binding by the gyrase. In Legionella pneumophila (strain Paris), this protein is DNA gyrase inhibitor YacG.